The following is a 418-amino-acid chain: Gamma-glutamyl phosphate reductase (418 aa).

It belongs to the gamma-glutamyl phosphate reductase family.

It localises to the cytoplasm. The enzyme catalyses L-glutamate 5-semialdehyde + phosphate + NADP(+) = L-glutamyl 5-phosphate + NADPH + H(+). It participates in amino-acid biosynthesis; L-proline biosynthesis; L-glutamate 5-semialdehyde from L-glutamate: step 2/2. Functionally, catalyzes the NADPH-dependent reduction of L-glutamate 5-phosphate into L-glutamate 5-semialdehyde and phosphate. The product spontaneously undergoes cyclization to form 1-pyrroline-5-carboxylate. This chain is Gamma-glutamyl phosphate reductase, found in Colwellia psychrerythraea (strain 34H / ATCC BAA-681) (Vibrio psychroerythus).